Here is a 369-residue protein sequence, read N- to C-terminus: Glycolate oxidase (369 aa).

N-acetylmethionine is present on M1. The region spanning 1 to 359 (MEITNVNEYE…SRSHIAADWD (359 aa)) is the FMN hydroxy acid dehydrogenase domain. Y24 contacts glyoxylate. FMN contacts are provided by residues 77-79 (PTA), S106, 127-129 (QLY), and T155. Residue Y129 coordinates glyoxylate. R164 is a glyoxylate binding site. Residues K230 and S252 each contribute to the FMN site. The glyoxylate site is built by H254 and R257. The Proton acceptor role is filled by H254. FMN is bound by residues 285 to 289 (DGGVR) and 308 to 309 (GR). A Microbody targeting signal motif is present at residues 367–369 (ARL).

It belongs to the FMN-dependent alpha-hydroxy acid dehydrogenase family. Homotetramer. It depends on FMN as a cofactor.

The protein localises to the peroxisome. It catalyses the reaction glycolate + O2 = glyoxylate + H2O2. The enzyme catalyses a (2S)-2-hydroxycarboxylate + O2 = a 2-oxocarboxylate + H2O2. It participates in photosynthesis; photorespiration; glycine from 2-phosphoglycolate: step 2/3. Catalyzes the oxidation of glycolate to glyoxylate, with a reduction of O2 to H2O2. Is a key enzyme in photorespiration in green plants. To a lesser extent, is also able to use L-lactate and 2-hydroxbyutanoate as substrate in vitro, but shows almost no activity with L-mandelate. The polypeptide is Glycolate oxidase (Spinacia oleracea (Spinach)).